The following is a 131-amino-acid chain: Holo-[acyl-carrier-protein] synthase (131 aa).

The Mg(2+) site is built by aspartate 8 and glutamate 59.

The protein belongs to the P-Pant transferase superfamily. AcpS family. Mg(2+) serves as cofactor.

The protein localises to the cytoplasm. It catalyses the reaction apo-[ACP] + CoA = holo-[ACP] + adenosine 3',5'-bisphosphate + H(+). Its function is as follows. Transfers the 4'-phosphopantetheine moiety from coenzyme A to a Ser of acyl-carrier-protein. This chain is Holo-[acyl-carrier-protein] synthase, found in Rickettsia felis (strain ATCC VR-1525 / URRWXCal2) (Rickettsia azadi).